The primary structure comprises 621 residues: UvrABC system protein C (621 aa).

Positions 13-92 (EKPGVYLMKN…IKKYRPRYNI (80 aa)) constitute a GIY-YIG domain. The region spanning 204-239 (NEVINDLKIKMEKASSELKFEEAASFRDKLLAVEKI) is the UVR domain.

The protein belongs to the UvrC family. Interacts with UvrB in an incision complex.

Its subcellular location is the cytoplasm. Functionally, the UvrABC repair system catalyzes the recognition and processing of DNA lesions. UvrC both incises the 5' and 3' sides of the lesion. The N-terminal half is responsible for the 3' incision and the C-terminal half is responsible for the 5' incision. The polypeptide is UvrABC system protein C (Clostridium novyi (strain NT)).